The chain runs to 243 residues: Tryptophan synthase alpha chain (243 aa).

Active-site proton acceptor residues include Glu-31 and Asp-42.

Belongs to the TrpA family. Tetramer of two alpha and two beta chains.

The catalysed reaction is (1S,2R)-1-C-(indol-3-yl)glycerol 3-phosphate + L-serine = D-glyceraldehyde 3-phosphate + L-tryptophan + H2O. The protein operates within amino-acid biosynthesis; L-tryptophan biosynthesis; L-tryptophan from chorismate: step 5/5. Its function is as follows. The alpha subunit is responsible for the aldol cleavage of indoleglycerol phosphate to indole and glyceraldehyde 3-phosphate. The chain is Tryptophan synthase alpha chain from Staphylococcus epidermidis (strain ATCC 35984 / DSM 28319 / BCRC 17069 / CCUG 31568 / BM 3577 / RP62A).